A 428-amino-acid chain; its full sequence is MKAELIKKEGNKVTLKITVDNNKFEAAVNKAYNKSRNKYNIPGFRKGKAPRIVIETQYGKGIFYNDAIEILFPEVYPEAIKELDIDPIDNPDLDIEEISKDNGLVMVLNVEVKPEFELGNYKGIEIAKVENTVSDENVDAKLQEMVEKNARLVSVEDKALEDGDTAIIDFEGFENGVAFDGGKGENYNLVIGSNTFIPGFEEQLVGKKAGEEVEVNVTFPEEYHSQDLAGKPVVFNVKINDVKVKELSALDDEFAKDTSEFDSLDELKADVRAKLEEEAKNRADAETRNSVVEKVAENTEIEIPEVMIQHQIDNMLNELNYQLQYQGFGLQQLLEMTGRTMEELREERKEDAKKLVKSSLVLEAITKAEGIEATEEEFKAELEKMASAYNMEVEKIEASLRDADKEDIKGQIKIRKTIDLLVDNATIA.

The PPIase FKBP-type domain occupies 163 to 248 (GDTAIIDFEG…INDVKVKELS (86 aa)).

This sequence belongs to the FKBP-type PPIase family. Tig subfamily.

It localises to the cytoplasm. It catalyses the reaction [protein]-peptidylproline (omega=180) = [protein]-peptidylproline (omega=0). Functionally, involved in protein export. Acts as a chaperone by maintaining the newly synthesized protein in an open conformation. Functions as a peptidyl-prolyl cis-trans isomerase. This Clostridioides difficile (strain 630) (Peptoclostridium difficile) protein is Trigger factor.